The sequence spans 191 residues: Protein GrpE (191 aa).

The segment covering 1–10 has biased composition (basic and acidic residues); that stretch reads MNHEEQKVET. A disordered region spans residues 1–28; sequence MNHEEQKVETMEQVEAQPVEPTDVDSEV.

Belongs to the GrpE family. Homodimer.

It is found in the cytoplasm. Its function is as follows. Participates actively in the response to hyperosmotic and heat shock by preventing the aggregation of stress-denatured proteins, in association with DnaK and GrpE. It is the nucleotide exchange factor for DnaK and may function as a thermosensor. Unfolded proteins bind initially to DnaJ; upon interaction with the DnaJ-bound protein, DnaK hydrolyzes its bound ATP, resulting in the formation of a stable complex. GrpE releases ADP from DnaK; ATP binding to DnaK triggers the release of the substrate protein, thus completing the reaction cycle. Several rounds of ATP-dependent interactions between DnaJ, DnaK and GrpE are required for fully efficient folding. The protein is Protein GrpE of Aeromonas salmonicida (strain A449).